The following is a 228-amino-acid chain: ATP synthase subunit a 2 (228 aa).

6 helical membrane passes run 16-36 (VGTT…GAWL), 74-94 (VFPF…SSLI), 103-123 (DLSA…WFGI), 139-159 (SPFL…ALAV), 173-193 (LLVL…LHIV), and 194-214 (EALV…AGAI).

The protein belongs to the ATPase A chain family. F-type ATPases have 2 components, CF(1) - the catalytic core - and CF(0) - the membrane proton channel. CF(1) has five subunits: alpha(3), beta(3), gamma(1), delta(1), epsilon(1). CF(0) has three main subunits: a(1), b(2) and c(9-12). The alpha and beta chains form an alternating ring which encloses part of the gamma chain. CF(1) is attached to CF(0) by a central stalk formed by the gamma and epsilon chains, while a peripheral stalk is formed by the delta and b chains.

It localises to the cell inner membrane. Key component of the proton channel; it plays a direct role in the translocation of protons across the membrane. In Pelobacter propionicus (strain DSM 2379 / NBRC 103807 / OttBd1), this protein is ATP synthase subunit a 2.